Consider the following 1207-residue polypeptide: Systemin receptor SR160 (1207 aa).

A signal peptide spans 1–34; that stretch reads MKAHKTVFNQHPLSLNKLFFVLLLIFFLPPASPA. Positions 71-78 match the Cys pair 1 motif; it reads CSFTGVSC. 20 LRR repeats span residues 109-131, 135-157, 161-181, 186-207, 213-234, 235-257, 258-280, 282-304, 305-325, 329-350, 353-375, 378-401, 402-423, 428-450, 452-474, 476-499, 500-523, 524-547, 548-570, and 572-594; these read NLES…AKSQ, TLDS…SSFG, NLKS…EMLK, SLQV…PWVS, ELEF…LDFK, NLSY…KDCS, NLQH…LSSC, KLSF…PSES, LQYL…QLAD, TVVE…SLGE, SLEL…TLLK, NIKT…SNLP, KLET…GICK, NLKV…LSNC, QLVS…LGSL, KLKD…MYLQ, ALEN…SNCT, KLNW…GRLS, NLAI…LGNC, and SLIW…LFKQ. Asn119 carries N-linked (GlcNAc...) asparagine glycosylation. Residues Asn166 and Asn196 are each glycosylated (N-linked (GlcNAc...) asparagine). Residues Asn235 and Asn245 are each glycosylated (N-linked (GlcNAc...) asparagine). The N-linked (GlcNAc...) asparagine glycan is linked to Asn287. N-linked (GlcNAc...) asparagine glycans are attached at residues Asn339 and Asn363. N-linked (GlcNAc...) asparagine glycans are attached at residues Asn412 and Asn449. N-linked (GlcNAc...) asparagine glycosylation occurs at Asn521. Asn556, Asn584, Asn646, and Asn662 each carry an N-linked (GlcNAc...) asparagine glycan. 4 LRR repeats span residues 664–686, 688–711, 712–735, and 736–758; these read SMIF…LGAM, YLSI…GGLK, NVAI…TSLT, and LLGE…APFD. Residues Asn724, Asn746, and Asn767 are each glycosylated (N-linked (GlcNAc...) asparagine). Residues 771 to 779 carry the Cys pair 2 motif; sequence CGYPLPLPC. Residues 803–823 traverse the membrane as a helical segment; it reads SVAMGLLFSLFCIFGLIIVAI. Residues 888 to 1163 form the Protein kinase domain; it reads FHNDSLVGSG…IQVMAMFKEI (276 aa). Residues 894 to 902 and Lys916 contribute to the ATP site; that span reads VGSGGFGDV. The active-site Proton acceptor is Asp1014.

It belongs to the protein kinase superfamily. Ser/Thr protein kinase family. Glycosylated.

The protein localises to the cell membrane. It carries out the reaction L-seryl-[protein] + ATP = O-phospho-L-seryl-[protein] + ADP + H(+). It catalyses the reaction L-threonyl-[protein] + ATP = O-phospho-L-threonyl-[protein] + ADP + H(+). Receptor with a serine/threonine-protein kinase activity. Involved in the perception of systemin, a peptide hormone responsible for the systemic activation of defense genes in leaves of wounded plants. May also regulate, in response to brassinosteroid binding, a signaling cascade involved in plant development. In Solanum peruvianum (Peruvian tomato), this protein is Systemin receptor SR160.